We begin with the raw amino-acid sequence, 271 residues long: Delta(3,5)-Delta(2,4)-dienoyl-CoA isomerase (271 aa).

Substrate-binding positions include 62 to 66 (SGGKF) and Leu-120. The Proton donor/acceptor role is filled by Glu-152. A Peroxisome targeting signal (PTS1) motif is present at residues 269–271 (HKL).

This sequence belongs to the enoyl-CoA hydratase/isomerase family. As to quaternary structure, interacts with ECI1.

It is found in the peroxisome. It catalyses the reaction a (3E,5Z)-dienoyl-CoA = a (2E,4E)-(5,6-saturated)-dienoyl-CoA. Its pathway is lipid metabolism; fatty acid beta-oxidation. Its function is as follows. Peroxisomal di-isomerase that is involved in fatty acid metabolism enzyme by converting 3,5-dienoyl-CoAs to the corresponding 2,4-dienoyl-CoAs. Required for ECI1 to be located to the peroxisome. The polypeptide is Delta(3,5)-Delta(2,4)-dienoyl-CoA isomerase (Saccharomyces cerevisiae (strain ATCC 204508 / S288c) (Baker's yeast)).